A 180-amino-acid polypeptide reads, in one-letter code: Probable chorismate pyruvate-lyase (180 aa).

Substrate contacts are provided by arginine 82, leucine 120, and glutamate 165.

It belongs to the UbiC family.

The protein localises to the cytoplasm. The enzyme catalyses chorismate = 4-hydroxybenzoate + pyruvate. It participates in cofactor biosynthesis; ubiquinone biosynthesis. Its function is as follows. Removes the pyruvyl group from chorismate, with concomitant aromatization of the ring, to provide 4-hydroxybenzoate (4HB) for the ubiquinone pathway. The protein is Probable chorismate pyruvate-lyase of Aliivibrio fischeri (strain ATCC 700601 / ES114) (Vibrio fischeri).